The chain runs to 165 residues: Large ribosomal subunit protein uL10 (165 aa).

This sequence belongs to the universal ribosomal protein uL10 family. In terms of assembly, part of the ribosomal stalk of the 50S ribosomal subunit. The N-terminus interacts with L11 and the large rRNA to form the base of the stalk. The C-terminus forms an elongated spine to which L12 dimers bind in a sequential fashion forming a multimeric L10(L12)X complex.

Functionally, forms part of the ribosomal stalk, playing a central role in the interaction of the ribosome with GTP-bound translation factors. This Burkholderia mallei (strain NCTC 10229) protein is Large ribosomal subunit protein uL10.